Reading from the N-terminus, the 136-residue chain is HTH-type transcriptional regulator LrpA (136 aa).

The HTH asnC-type domain occupies 2-63 (IDEIDKKILD…EVNQVKLGFS (62 aa)). Residues 21 to 40 (MKKLGEKVHLTAPATASRVV) constitute a DNA-binding region (H-T-H motif).

Negative regulation of glyA transcription and kinB-dependent sporulation. The protein is HTH-type transcriptional regulator LrpA (lrpA) of Bacillus subtilis (strain 168).